A 197-amino-acid chain; its full sequence is MSELLNYVASCRLPTEWGVFTMHGFEEAGGQEHVALTVGDCSDGNPVLTRIHSECLTGDALFSKKCDCGPQLEAAMKAVQAEGRGIIVYLRQEGRGIGLINKIRAYHLQDQGMDTVEANVALGLPVDARDFRLAQSIYEYLGIRSVKLLTNNPEKIQTLKDAGINVVERIPLHVGENLENKRYLQTKADKLGHLMSE.

Residue 50–54 (RIHSE) coordinates GTP. Zn(2+)-binding residues include cysteine 55, cysteine 66, and cysteine 68. Residues glutamine 71, 93–95 (EGR), and threonine 115 contribute to the GTP site. Aspartate 127 (proton acceptor) is an active-site residue. Arginine 129 functions as the Nucleophile in the catalytic mechanism. Residues threonine 150 and lysine 155 each contribute to the GTP site.

This sequence belongs to the GTP cyclohydrolase II family. Zn(2+) is required as a cofactor.

It catalyses the reaction GTP + 4 H2O = 2,5-diamino-6-hydroxy-4-(5-phosphoribosylamino)-pyrimidine + formate + 2 phosphate + 3 H(+). It functions in the pathway cofactor biosynthesis; riboflavin biosynthesis; 5-amino-6-(D-ribitylamino)uracil from GTP: step 1/4. In terms of biological role, catalyzes the conversion of GTP to 2,5-diamino-6-ribosylamino-4(3H)-pyrimidinone 5'-phosphate (DARP), formate and pyrophosphate. The chain is GTP cyclohydrolase-2 from Neisseria meningitidis serogroup A / serotype 4A (strain DSM 15465 / Z2491).